A 391-amino-acid chain; its full sequence is MFLKNIFIALAIALLVDASPAKRSPGFVTLDFDVIKTPVNATGQEGKVKRQALPVTLNNEHVSYAADITIGSNKQKFNVIVDTGSSDLWVPDASVTCDKPRPGQSADFCKGKGIYTPKSSTTSQNLGTPFYIGYGDGSSSQGTLYKDTVGFGGASITKQVFADITKTSIPQGILGIGYKTNEAAGDYDNVPVTLKNQGVIAKNAYSLYLNSPNAATGQIIFGGVDKAKYSGSLIAVPVTSDRELRITLNSLKAVGKNINGNIDVLLDSGTTITYLQQDVAQDIIDAFQAELKSDGQGHTFYVTDCQTSGTVDFNFDNNVKISVPASEFTAPLSYANGQPYPKCQLLLGISDANILGDNFLRSAYLVYDLDDDKISLAQVKYTSASNIAALT.

The signal sequence occupies residues 1–18; it reads MFLKNIFIALAIALLVDA. A propeptide spans 19 to 50 (activation peptide); the sequence is SPAKRSPGFVTLDFDVIKTPVNATGQEGKVKR. N40 carries an N-linked (GlcNAc...) asparagine glycan. Residues 64–377 enclose the Peptidase A1 domain; that stretch reads YAADITIGSN…DLDDDKISLA (314 aa). D82 is an active-site residue. Residues C97 and C109 are joined by a disulfide bond. Residue D267 is part of the active site. A disulfide bridge links C305 with C343.

This sequence belongs to the peptidase A1 family. Post-translationally, O-glycosylated.

Its subcellular location is the secreted. It carries out the reaction Preferential cleavage at the carboxyl of hydrophobic amino acids, but fails to cleave 15-Leu-|-Tyr-16, 16-Tyr-|-Leu-17 and 24-Phe-|-Phe-25 of insulin B chain. Activates trypsinogen, and degrades keratin.. This Candida albicans (strain WO-1) (Yeast) protein is Candidapepsin-1 (SAP1).